The chain runs to 403 residues: S-adenosylmethionine synthase (403 aa).

141 to 146 contacts ATP; the sequence is GQGSVD.

Belongs to the AdoMet synthase 2 family. Mg(2+) serves as cofactor.

It catalyses the reaction L-methionine + ATP + H2O = S-adenosyl-L-methionine + phosphate + diphosphate. The protein operates within amino-acid biosynthesis; S-adenosyl-L-methionine biosynthesis; S-adenosyl-L-methionine from L-methionine: step 1/1. Functionally, catalyzes the formation of S-adenosylmethionine from methionine and ATP. The sequence is that of S-adenosylmethionine synthase from Methanococcus aeolicus (strain ATCC BAA-1280 / DSM 17508 / OCM 812 / Nankai-3).